The following is a 128-amino-acid chain: Sulfurtransferase TusD (128 aa).

Cysteine 78 serves as the catalytic Cysteine persulfide intermediate.

This sequence belongs to the DsrE/TusD family. Heterohexamer, formed by a dimer of trimers. The hexameric TusBCD complex contains 2 copies each of TusB, TusC and TusD. The TusBCD complex interacts with TusE.

Its subcellular location is the cytoplasm. In terms of biological role, part of a sulfur-relay system required for 2-thiolation of 5-methylaminomethyl-2-thiouridine (mnm(5)s(2)U) at tRNA wobble positions. Accepts sulfur from TusA and transfers it in turn to TusE. The polypeptide is Sulfurtransferase TusD (Escherichia coli O45:K1 (strain S88 / ExPEC)).